Here is a 56-residue protein sequence, read N- to C-terminus: Small ribosomal subunit protein bS21 (56 aa).

It belongs to the bacterial ribosomal protein bS21 family.

The sequence is that of Small ribosomal subunit protein bS21 from Synechococcus sp. (strain RCC307).